A 131-amino-acid chain; its full sequence is Profilin-4 (131 aa).

Cys13 and Cys115 are disulfide-bonded. Positions 81-97 match the Involved in PIP2 interaction motif; the sequence is AVIRGKKGAGGITVKKT. A Phosphothreonine modification is found at Thr111.

It belongs to the profilin family. In terms of assembly, occurs in many kinds of cells as a complex with monomeric actin in a 1:1 ratio. In terms of processing, phosphorylated by MAP kinases.

The protein resides in the cytoplasm. It is found in the cytoskeleton. Binds to actin and affects the structure of the cytoskeleton. At high concentrations, profilin prevents the polymerization of actin, whereas it enhances it at low concentrations. This chain is Profilin-4, found in Olea europaea (Common olive).